A 622-amino-acid chain; its full sequence is Cilia- and flagella-associated protein 206 (622 aa).

Positions 571-592 are disordered; the sequence is QVYPPKDTSTQSMREDSTGVPR.

It belongs to the CFAP206 family.

The protein resides in the cytoplasm. Its subcellular location is the cytoskeleton. It is found in the cilium axoneme. The protein localises to the cilium basal body. Its function is as follows. Essential for sperm motility and is involved in the regulation of the beating frequency of motile cilia on the epithelial cells of the respiratory tract. Required for the establishment of radial spokes in sperm flagella. The protein is Cilia- and flagella-associated protein 206 of Macaca fascicularis (Crab-eating macaque).